A 297-amino-acid polypeptide reads, in one-letter code: MATNLRGVMAALLTPFDQQQALDKASLRRLVQFNIQQGIDGLYVGGSTGEAFVQSLSEREQVLEIVAEEAKGKIKLIAHVGCVSTAESQQLAASAKRYGFDAVSAVTPFYYPFSFEEHCDHYRAIIDSADGLPMVVYNIPALSGVKLSLDQINTLVTLPGVGALKQTSGDLYQMEQIRREHPDLVLYNGYDEIFASGLLAGADGGIGSTYNIMGWRYQGIVKALKEGDIQTAQKLQTECNKVIDLLIKTGVFRGLKTVLHYMDVVSVPLCRKPFGPVDEKYLPELKALAQQLMQERG.

Aceneuramate-binding residues include Ser47 and Thr48. Tyr137 (proton donor) is an active-site residue. The Schiff-base intermediate with substrate role is filled by Lys165. Aceneuramate-binding residues include Thr167, Gly189, Asp191, Glu192, and Ser208.

This sequence belongs to the DapA family. NanA subfamily. Homotetramer.

The protein resides in the cytoplasm. It carries out the reaction aceneuramate = aldehydo-N-acetyl-D-mannosamine + pyruvate. It functions in the pathway amino-sugar metabolism; N-acetylneuraminate degradation; D-fructose 6-phosphate from N-acetylneuraminate: step 1/5. Catalyzes the reversible aldol cleavage of N-acetylneuraminic acid (sialic acid; Neu5Ac) to form pyruvate and N-acetylmannosamine (ManNAc) via a Schiff base intermediate. The chain is N-acetylneuraminate lyase from Escherichia coli (strain SMS-3-5 / SECEC).